The chain runs to 865 residues: Lactose regulatory protein LAC9 (865 aa).

Residues 1 to 15 (MGSRASNSPSFSSKA) show a composition bias toward polar residues. Positions 1–87 (MGSRASNSPS…NNNNNNNKKS (87 aa)) are disordered. Residues 22 to 34 (EYKKNAVKKETIR) show a composition bias toward basic and acidic residues. The span at 67–85 (SNGNKNDSNANNNNNNNNK) shows a compositional bias: low complexity. Cys95, Cys98, Cys105, Cys112, Cys115, and Cys122 together coordinate Zn(2+). A DNA-binding region (zn(2)-C6 fungal-type) is located at residues 95-122 (CDACRKKKWKCSKTVPTCTNCLKYNLDC). The segment at 818–840 (LQSSTTQMRPPTTSGWPDTNNFL) is disordered.

The protein resides in the nucleus. Its function is as follows. Positive regulatory protein, that controls induction of the lactose-galactose regulation of Kluyveromyces lactis. This Kluyveromyces lactis (strain ATCC 8585 / CBS 2359 / DSM 70799 / NBRC 1267 / NRRL Y-1140 / WM37) (Yeast) protein is Lactose regulatory protein LAC9 (LAC9).